The sequence spans 946 residues: Villin-4 (946 aa).

Gelsolin-like repeat units lie at residues 28 to 109 (NFKP…ETEK), 152 to 219 (VHVK…EDGK), 274 to 339 (LEHE…TIMF), and 641 to 715 (EIHH…PQFF). Disordered stretches follow at residues 744 to 783 (ATPS…ERHR) and 846 to 902 (TKST…PAPD). Residues 765 to 777 (QDKSQQRTRSMSH) show a composition bias toward polar residues. Acidic residues predominate over residues 874-883 (SENEPEDDEN). Residues 881–946 (DENSTIYPYE…NRLKSDLQLF (66 aa)) enclose the HP domain.

The protein belongs to the villin/gelsolin family.

It is found in the cytoplasm. The protein localises to the cytoskeleton. Functionally, ca(2+)-regulated actin-binding protein. Binds actin microfilaments (MFs). Involved in actin filament bundling, severing and capping. Caps the barbed end of actin filaments and is able to sever them in a calcium-dependent manner. This Oryza sativa subsp. indica (Rice) protein is Villin-4.